The sequence spans 411 residues: Histidine--tRNA ligase (411 aa).

The protein belongs to the class-II aminoacyl-tRNA synthetase family. As to quaternary structure, homodimer.

The protein resides in the cytoplasm. The enzyme catalyses tRNA(His) + L-histidine + ATP = L-histidyl-tRNA(His) + AMP + diphosphate + H(+). This is Histidine--tRNA ligase from Dictyoglomus turgidum (strain DSM 6724 / Z-1310).